Reading from the N-terminus, the 404-residue chain is Ubiquitin-like modifier-activating enzyme 5 (404 aa).

Residues glycine 83, aspartate 104, lysine 127, asparagine 150, and asparagine 184 each contribute to the ATP site. Zn(2+)-binding residues include cysteine 226 and cysteine 229. Residue cysteine 250 is the Glycyl thioester intermediate of the active site. The Zn(2+) site is built by cysteine 303 and cysteine 308. The segment at 372–393 (APEKSSETSEETVTAATADETS) is disordered. The segment covering 382–391 (ETVTAATADE) has biased composition (low complexity).

It belongs to the ubiquitin-activating E1 family. UBA5 subfamily.

E1-like enzyme which activates UFM1. In Drosophila sechellia (Fruit fly), this protein is Ubiquitin-like modifier-activating enzyme 5.